A 268-amino-acid polypeptide reads, in one-letter code: MEISSSSKKHFILVHGLCHGAWCWYRVVAALRAAGHRATALDMAASGAHPARVDEVGTFEEYSRPLLDAVAAAAAPGERLVLVGHSHGGLSVALAMERFPDKVAAAVFVAAAMPCVGKHMGVPTEEFMRRTAPEGLLMDCEMVAINNSQGSGVAINLGPTFLAQKYYQQSPAEDLALAKMLVRPGNQFMDDPVMKDESLLTNGNYGSVKKVYVIAKADSSSTEEMQRWMVAMSPGTDVEEIAGADHAVMNSKPRELCDILIKIANKYE.

Ser-86 serves as the catalytic Acyl-ester intermediate. Active-site charge relay system residues include Asp-218 and His-246.

The protein belongs to the AB hydrolase superfamily.

In terms of biological role, exhibits esterase activity towards naphthol AS-acetate in vitro. In Oryza sativa subsp. japonica (Rice), this protein is Esterase PIR7B (PIR7B).